The primary structure comprises 416 residues: Kelch repeat-containing protein At1g19460 (416 aa).

The segment covering Met1 to Ser11 has biased composition (polar residues). A disordered region spans residues Met1–Ser55. Basic and acidic residues-rich tracts occupy residues Asp16–Leu26 and Asn38–Arg52. Kelch repeat units lie at residues Glu156 to Gly202, Lys203 to Ala250, Lys255 to Met293, and Gln294 to Ser344.

In Arabidopsis thaliana (Mouse-ear cress), this protein is Kelch repeat-containing protein At1g19460.